A 430-amino-acid chain; its full sequence is UDP-N-acetylglucosamine 1-carboxyvinyltransferase (430 aa).

Phosphoenolpyruvate is bound at residue 22–23; the sequence is KN. Arg-102 contributes to the UDP-N-acetyl-alpha-D-glucosamine binding site. The active-site Proton donor is Cys-126. 2-(S-cysteinyl)pyruvic acid O-phosphothioketal is present on Cys-126. Residues 131–135, 172–175, Asp-317, and Ile-339 contribute to the UDP-N-acetyl-alpha-D-glucosamine site; these read RPVDL and KVSV.

The protein belongs to the EPSP synthase family. MurA subfamily.

The protein resides in the cytoplasm. The catalysed reaction is phosphoenolpyruvate + UDP-N-acetyl-alpha-D-glucosamine = UDP-N-acetyl-3-O-(1-carboxyvinyl)-alpha-D-glucosamine + phosphate. It functions in the pathway cell wall biogenesis; peptidoglycan biosynthesis. In terms of biological role, cell wall formation. Adds enolpyruvyl to UDP-N-acetylglucosamine. This is UDP-N-acetylglucosamine 1-carboxyvinyltransferase from Rhizobium etli (strain ATCC 51251 / DSM 11541 / JCM 21823 / NBRC 15573 / CFN 42).